The sequence spans 300 residues: tRNA dimethylallyltransferase (300 aa).

11-18 (GPTAVGKS) contacts ATP. 13–18 (TAVGKS) provides a ligand contact to substrate. The tract at residues 35–38 (DSVQ) is interaction with substrate tRNA.

This sequence belongs to the IPP transferase family. Monomer. Requires Mg(2+) as cofactor.

It catalyses the reaction adenosine(37) in tRNA + dimethylallyl diphosphate = N(6)-dimethylallyladenosine(37) in tRNA + diphosphate. In terms of biological role, catalyzes the transfer of a dimethylallyl group onto the adenine at position 37 in tRNAs that read codons beginning with uridine, leading to the formation of N6-(dimethylallyl)adenosine (i(6)A). This chain is tRNA dimethylallyltransferase, found in Borrelia hermsii (strain HS1 / DAH).